The primary structure comprises 281 residues: 2-dehydro-3-deoxyphosphooctonate aldolase (281 aa).

The protein belongs to the KdsA family.

The protein resides in the cytoplasm. It catalyses the reaction D-arabinose 5-phosphate + phosphoenolpyruvate + H2O = 3-deoxy-alpha-D-manno-2-octulosonate-8-phosphate + phosphate. It functions in the pathway carbohydrate biosynthesis; 3-deoxy-D-manno-octulosonate biosynthesis; 3-deoxy-D-manno-octulosonate from D-ribulose 5-phosphate: step 2/3. The protein operates within bacterial outer membrane biogenesis; lipopolysaccharide biosynthesis. The polypeptide is 2-dehydro-3-deoxyphosphooctonate aldolase (Ectopseudomonas mendocina (strain ymp) (Pseudomonas mendocina)).